Here is a 288-residue protein sequence, read N- to C-terminus: Phenazine biosynthesis-like domain-containing protein (288 aa).

The active site involves glutamate 46.

The protein belongs to the PhzF family. Interacts with UNRIP/MAWD.

This is Phenazine biosynthesis-like domain-containing protein (PBLD) from Bos taurus (Bovine).